We begin with the raw amino-acid sequence, 490 residues long: Phosphoethanolamine N-methyltransferase 3 (490 aa).

G60, R65, D81, D106, V107, and N125 together coordinate S-adenosyl-L-homocysteine. Phosphocholine contacts are provided by S158, S163, G164, R168, and Y175. N-methylethanolamine phosphate-binding positions include 244 to 245 and Y253; that span reads QY. Residue Y253 participates in phosphocholine binding. S-adenosyl-L-homocysteine-binding residues include V262, S263, G289, D311, D337, C338, and R354. Positions 385, 399, 403, 405, and 471 each coordinate phosphocholine. N-methylethanolamine phosphate-binding positions include Y385, Y399, 403–405, and K471; that span reads RGY.

This sequence belongs to the class I-like SAM-binding methyltransferase superfamily. PEAMT family. Expressed in root vasculature, shoots, rosettes leaves, cauline leaves, sepals, petals, anther filaments and ovules. Highly expressed in leaf vasculature.

Its subcellular location is the cytoplasm. The enzyme catalyses phosphoethanolamine + S-adenosyl-L-methionine = N-methylethanolamine phosphate + S-adenosyl-L-homocysteine + H(+). It carries out the reaction N-methylethanolamine phosphate + S-adenosyl-L-methionine = N,N-dimethylethanolamine phosphate + S-adenosyl-L-homocysteine + H(+). It catalyses the reaction N,N-dimethylethanolamine phosphate + S-adenosyl-L-methionine = phosphocholine + S-adenosyl-L-homocysteine + H(+). Its pathway is phospholipid metabolism; phosphatidylcholine biosynthesis; phosphocholine from phosphoethanolamine: step 1/1. In terms of biological role, involved in phosphocholine biosynthesis. Catalyzes the N-methylation of phosphoethanolamine, phosphomonomethylethanolamine and phosphodimethylethanolamine, the three methylation steps required to convert phosphoethanolamine to phosphocholine (PC). In association with NMT1, regulates PC homeostasis, phase transition at the shoot apex, coordinated organ development, and fertility. In associtation with NMT1, involved in phosphatidylcholine biosynthesis and vascular development. The polypeptide is Phosphoethanolamine N-methyltransferase 3 (Arabidopsis thaliana (Mouse-ear cress)).